We begin with the raw amino-acid sequence, 948 residues long: ATPase 8, plasma membrane-type (948 aa).

Over 1–64 (MATEFSWDEI…EKSENKFLKF (64 aa)) the chain is Cytoplasmic. A helical membrane pass occupies residues 65 to 84 (LGFMWNPLSWVMESAAIMAI). The Extracellular segment spans residues 85-96 (VLANGGGKAPDW). A helical transmembrane segment spans residues 97-117 (QDFIGIMVLLIINSTISFIEE). Residues 118–246 (NNAGNAAAAL…GHFQKVLTSI (129 aa)) lie on the Cytoplasmic side of the membrane. Residues 247–267 (GNFCICSIGLGMLIEILIMYP) form a helical membrane-spanning segment. Residues 268-276 (IQHRTYRDG) lie on the Extracellular side of the membrane. The helical transmembrane segment at 277-294 (IDNLLVLLIGGIPIAMPT) threads the bilayer. The Cytoplasmic portion of the chain corresponds to 295–646 (VLSVTMAIGS…TSRAIFQRMK (352 aa)). D332 acts as the 4-aspartylphosphate intermediate in catalysis. Positions 591 and 595 each coordinate Mg(2+). Residues 647 to 668 (NYTIYAVSITIRIVLGFMLVAL) form a helical membrane-spanning segment. The Extracellular portion of the chain corresponds to 669–673 (IWRFD). The helical transmembrane segment at 674 to 696 (FAPFMVLIIAILNDGTIMTISKD) threads the bilayer. Topologically, residues 697–712 (RVKPSPVPDSWKLNEI) are cytoplasmic. A helical membrane pass occupies residues 713 to 733 (FATGVVLGTYMALTTVLFFWL). Residues 734-754 (AHDTDFFSKTFGVRSIQGNEE) are Extracellular-facing. Residues 755–775 (ELMAALYLQVSIISQALIFVT) form a helical membrane-spanning segment. Residues 776-787 (RSRSWSFVERPG) lie on the Cytoplasmic side of the membrane. Residues 788–808 (FLLLIAFVIAQLVATLIAVYA) traverse the membrane as a helical segment. Residues 809 to 816 (NWGFARIV) lie on the Extracellular side of the membrane. A helical membrane pass occupies residues 817-837 (GCGWGWAGGIWVYSIITYIPL). Topologically, residues 838–948 (DILKFIIRYA…IDTIQQHYTV (111 aa)) are cytoplasmic. T884 carries the phosphothreonine modification. S930 carries the post-translational modification Phosphoserine. Residues 946–948 (YTV) are interaction with 14-3-3 proteins. T947 carries the post-translational modification Phosphothreonine.

Belongs to the cation transport ATPase (P-type) (TC 3.A.3) family. Type IIIA subfamily. In terms of assembly, binds to 14-3-3 proteins. The binding is induced by phosphorylation of Thr-947. Binding to 14-3-3 proteins activates the H(+)-ATPase. As to expression, expressed in guard cells, roots and leaves, and barely in mesophyll cells.

Its subcellular location is the membrane. The enzyme catalyses ATP + H2O + H(+)(in) = ADP + phosphate + 2 H(+)(out). Functionally, the plasma membrane H(+) ATPase of plants and fungi generates a proton gradient that drives the active transport of nutrients by H(+)-symport. The resulting external acidification and/or internal alkinization may mediate growth responses. This Arabidopsis thaliana (Mouse-ear cress) protein is ATPase 8, plasma membrane-type (AHA8).